An 876-amino-acid polypeptide reads, in one-letter code: Leucine--tRNA ligase (876 aa).

The 'HIGH' region signature appears at 42 to 52; the sequence is PYPSGKLHMGH. The 'KMSKS' region motif lies at 634–638; it reads KMGKS. K637 contributes to the ATP binding site.

It belongs to the class-I aminoacyl-tRNA synthetase family.

It is found in the cytoplasm. It carries out the reaction tRNA(Leu) + L-leucine + ATP = L-leucyl-tRNA(Leu) + AMP + diphosphate. This is Leucine--tRNA ligase from Variovorax paradoxus (strain S110).